The primary structure comprises 49 residues: RTCQSQSHKFKGACFSDTNCASVCRTENFPRGQCNQHHVERKCYCERDC.

Intrachain disulfides connect Cys-3–Cys-49, Cys-14–Cys-34, Cys-20–Cys-43, and Cys-24–Cys-45.

Functionally, plant defense peptide. The chain is Defensin Tm-AMP-D1.2 from Triticum monococcum (Einkorn wheat).